The sequence spans 247 residues: uncharacterized protein (247 aa).

Transmembrane regions (helical) follow at residues 19–39 (IFFT…SIMF), 73–93 (FFTS…AFFI), 106–126 (FLSF…YFII), 155–175 (YIQF…CPLF), 196–216 (YIYF…ILSQ), and 217–237 (FFLF…SCFY).

Belongs to the TatC family.

Its subcellular location is the mitochondrion membrane. This is an uncharacterized protein from Nephroselmis olivacea (Green alga).